Consider the following 292-residue polypeptide: Lyso-ornithine lipid O-acyltransferase (292 aa).

A helical membrane pass occupies residues 11–31; sequence GMLLVMVSLVLMPVQILCLWL. Positions 258–292 are disordered; it reads RLRGRSRSAAKGEPAPACSAAPDIPSDAQRSRLAP.

Belongs to the 1-acyl-sn-glycerol-3-phosphate acyltransferase family. OlsA subfamily.

The protein localises to the membrane. It catalyses the reaction a lyso-ornithine lipid + a fatty acyl-[ACP] = an N(2)-[(3R)-3-(acyloxy)acyl]-L-ornithine lipid + holo-[ACP]. The protein operates within lipid metabolism. In terms of biological role, catalyzes the second step in the formation of ornithine lipids, which are phosphorus-free membrane lipids. Uses acyl-acyl carrier protein (acyl-AcpP) as an acyl donor and converts lyso-ornithine lipid (LOL) into ornithine lipid (OL). This is Lyso-ornithine lipid O-acyltransferase from Rhizobium meliloti (strain 1021) (Ensifer meliloti).